An 84-amino-acid chain; its full sequence is Large ribosomal subunit protein bL27 (84 aa).

It belongs to the bacterial ribosomal protein bL27 family.

The protein is Large ribosomal subunit protein bL27 of Buchnera aphidicola subsp. Schizaphis graminum (strain Sg).